A 239-amino-acid polypeptide reads, in one-letter code: Regulator of G-protein signaling 20 (239 aa).

The interval 1-29 is disordered; sequence MRTANGGPRARASPSASPADPGLPEGSER. Positions 8–19 are enriched in low complexity; it reads PRARASPSASPA. The RGS domain maps to 113–229; it reads SFDNLMVTPA…MNSTVYKDLL (117 aa).

Forms a complex with G(alpha)z/i2 subunits and mu-opioid receptors; the formation of this complex results in mu-opioid receptor desensitization. Interacts with OPRM1. Fatty acylated. Heavily palmitoylated in the cysteine string motif. In terms of processing, N- and O-glycosylated in synapsomal membranes. Post-translationally, serine phosphorylated in synapsomal membranes. Sumoylated with SUMO1, SUMO2 and SUMO3. Sumoylation increases binding to the G-proteins, G(alpha)-i2 and G(z), and interaction with mu-opioid receptors.

Its subcellular location is the membrane. The protein localises to the nucleus. The protein resides in the cytoplasm. Inhibits signal transduction by increasing the GTPase activity of G protein alpha subunits thereby driving them into their inactive GDP-bound form. Binds selectively to G(z)-alpha and G(alpha)-i2 subunits, accelerates their GTPase activity and regulates their signaling activities. The G(z)-alpha activity is inhibited by the phosphorylation and palmitoylation of the G-protein. Negatively regulates mu-opioid receptor-mediated activation of the G-proteins. The chain is Regulator of G-protein signaling 20 (Rgs20) from Mus musculus (Mouse).